A 383-amino-acid polypeptide reads, in one-letter code: Aliphatic nitrilase (383 aa).

Residues 13 to 288 (VKVATVQAEP…EGLLYAELDL (276 aa)) enclose the CN hydrolase domain. E53 (proton acceptor) is an active-site residue. Residue K136 is the Proton donor of the active site. The Nucleophile role is filled by C170. Residues 359–383 (ATLPLDAPAPAPAPEQKSGRAKAEA) form a disordered region.

This sequence belongs to the carbon-nitrogen hydrolase superfamily. Nitrilase family.

It carries out the reaction an aliphatic nitrile + 2 H2O = a carboxylate + NH4(+). Functionally, acts on aliphatic nitriles such as acrylonitrile, crotononitrile and glutaronitrile. This Rhodococcus rhodochrous protein is Aliphatic nitrilase.